The following is an 83-amino-acid chain: Small ribosomal subunit protein eS21 (83 aa).

Belongs to the eukaryotic ribosomal protein eS21 family. Component of the 40S small ribosomal subunit. Interacts with sta.

Its subcellular location is the cytoplasm. The protein localises to the cytosol. It is found in the rough endoplasmic reticulum. Its function is as follows. May be an associated component of the ribosome rather than a core structural subunit. May act as a translation initiation factor. Has a role in regulation of cell proliferation in the hematopoietic organs and the imaginal disks of larva. This Drosophila simulans (Fruit fly) protein is Small ribosomal subunit protein eS21 (RpS21).